Reading from the N-terminus, the 86-residue chain is Small ribosomal subunit protein uS15 (86 aa).

Belongs to the universal ribosomal protein uS15 family. Part of the 30S ribosomal subunit. Forms a bridge to the 50S subunit in the 70S ribosome, contacting the 23S rRNA.

One of the primary rRNA binding proteins, it binds directly to 16S rRNA where it helps nucleate assembly of the platform of the 30S subunit by binding and bridging several RNA helices of the 16S rRNA. Its function is as follows. Forms an intersubunit bridge (bridge B4) with the 23S rRNA of the 50S subunit in the ribosome. This is Small ribosomal subunit protein uS15 from Ruthia magnifica subsp. Calyptogena magnifica.